A 604-amino-acid polypeptide reads, in one-letter code: Glutamyl-tRNA(Gln) amidotransferase subunit B, mitochondrial (604 aa).

The N-terminal 48 residues, 1-48, are a transit peptide targeting the mitochondrion; sequence MIRQCLSRRGAYSRYRLAARGVELAEPFHHQSSRPQGRRNWSSSPRCS. The interval 28 to 57 is disordered; the sequence is FHHQSSRPQGRRNWSSSPRCSLDIRTDTPR. The segment covering 33–46 has biased composition (polar residues); it reads SRPQGRRNWSSSPR.

It belongs to the GatB/GatE family. GatB subfamily. As to quaternary structure, subunit of the heterotrimeric GatCAB amidotransferase (AdT) complex, composed of A, B and C subunits.

It is found in the mitochondrion. The catalysed reaction is L-glutamyl-tRNA(Gln) + L-glutamine + ATP + H2O = L-glutaminyl-tRNA(Gln) + L-glutamate + ADP + phosphate + H(+). Allows the formation of correctly charged Gln-tRNA(Gln) through the transamidation of misacylated Glu-tRNA(Gln) in the mitochondria. The reaction takes place in the presence of glutamine and ATP through an activated gamma-phospho-Glu-tRNA(Gln). The polypeptide is Glutamyl-tRNA(Gln) amidotransferase subunit B, mitochondrial (Blastomyces gilchristii (strain SLH14081) (Blastomyces dermatitidis)).